The chain runs to 201 residues: Peptidyl-prolyl cis-trans isomerase FKBP11 (201 aa).

The signal sequence occupies residues 1–27 (MTLSPLLLPLQLLLLLLFSGAVCRAEA). One can recognise a PPIase FKBP-type domain in the interval 57-144 (GDTLHIHYTG…QYDVELIALI (88 aa)). Residues 156 to 176 (ILPLVGIAMVPALLGLIGYHL) form a helical membrane-spanning segment.

The protein belongs to the FKBP-type PPIase family. Interacts with IFITM5.

The protein resides in the membrane. It carries out the reaction [protein]-peptidylproline (omega=180) = [protein]-peptidylproline (omega=0). In terms of biological role, PPIases accelerate the folding of proteins during protein synthesis. In Mus musculus (Mouse), this protein is Peptidyl-prolyl cis-trans isomerase FKBP11 (Fkbp11).